The chain runs to 431 residues: MANSC domain-containing protein 1 (431 aa).

An N-terminal signal peptide occupies residues 1–26 (MFFGGKGSLTYTLVIICFLTLRLAAS). Residues 27–385 (QNCLNKSLED…QYGLPFEKWL (359 aa)) are Extracellular-facing. An N-linked (GlcNAc...) asparagine glycan is attached at N31. An MANSC domain is found at 33–117 (SLEDVVIDIQ…LKPAKGLRSY (85 aa)). N222 and N251 each carry an N-linked (GlcNAc...) asparagine glycan. The interval 236–279 (HTTSATPKPAIRLPTNASVTPSGTSQPQLATTSPPVTTVTSQPP) is disordered. Residues 250-265 (TNASVTPSGTSQPQLA) show a composition bias toward polar residues. The segment covering 266–279 (TTSPPVTTVTSQPP) has biased composition (low complexity). Residues N327 and N352 are each glycosylated (N-linked (GlcNAc...) asparagine). Positions 352–372 (NKTASWEGREASPGRSSQGNV) are disordered. The helical transmembrane segment at 386 to 408 (LIGSLLFGVLFLVIGLVLLGRIL) threads the bilayer. Over 409 to 431 (SESLRRKRYSRLDYLINGIYVDI) the chain is Cytoplasmic.

It is found in the membrane. The sequence is that of MANSC domain-containing protein 1 (MANSC1) from Macaca fascicularis (Crab-eating macaque).